The primary structure comprises 680 residues: Methionine--tRNA ligase (680 aa).

Residues 15-25 carry the 'HIGH' region motif; it reads PYANGPVHIGH. Residues cysteine 147, cysteine 150, cysteine 160, and cysteine 163 each coordinate Zn(2+). A 'KMSKS' region motif is present at residues 332 to 336; it reads KISTS. ATP is bound at residue threonine 335. The 102-residue stretch at 579–680 folds into the tRNA-binding domain; sequence DFLKLDIRVG…AEVAAGSQVK (102 aa).

It belongs to the class-I aminoacyl-tRNA synthetase family. MetG type 1 subfamily. In terms of assembly, homodimer. Requires Zn(2+) as cofactor.

Its subcellular location is the cytoplasm. It carries out the reaction tRNA(Met) + L-methionine + ATP = L-methionyl-tRNA(Met) + AMP + diphosphate. In terms of biological role, is required not only for elongation of protein synthesis but also for the initiation of all mRNA translation through initiator tRNA(fMet) aminoacylation. The sequence is that of Methionine--tRNA ligase from Porphyromonas gingivalis (strain ATCC BAA-308 / W83).